Here is a 1039-residue protein sequence, read N- to C-terminus: Probable inorganic carbon transporter subunit DabA 2 (1039 aa).

Zn(2+) is bound by residues C462, D464, H721, and C736.

This sequence belongs to the inorganic carbon transporter (TC 9.A.2) DabA family. In terms of assembly, forms a complex with DabB. It depends on Zn(2+) as a cofactor.

It localises to the cell inner membrane. Functionally, part of an energy-coupled inorganic carbon pump. The polypeptide is Probable inorganic carbon transporter subunit DabA 2 (Nitrobacter hamburgensis (strain DSM 10229 / NCIMB 13809 / X14)).